The primary structure comprises 143 residues: Nucleoside diphosphate kinase (143 aa).

ATP contacts are provided by K11, F59, R87, T93, R104, and N114. Catalysis depends on H117, which acts as the Pros-phosphohistidine intermediate.

The protein belongs to the NDK family. In terms of assembly, homotetramer. Mg(2+) serves as cofactor.

Its subcellular location is the cytoplasm. It catalyses the reaction a 2'-deoxyribonucleoside 5'-diphosphate + ATP = a 2'-deoxyribonucleoside 5'-triphosphate + ADP. It carries out the reaction a ribonucleoside 5'-diphosphate + ATP = a ribonucleoside 5'-triphosphate + ADP. Its function is as follows. Major role in the synthesis of nucleoside triphosphates other than ATP. The ATP gamma phosphate is transferred to the NDP beta phosphate via a ping-pong mechanism, using a phosphorylated active-site intermediate. The protein is Nucleoside diphosphate kinase of Shewanella sp. (strain MR-4).